The chain runs to 770 residues: Endothelin-converting enzyme 1 (770 aa).

Topologically, residues 1-68 (MRGVWPPPVS…WAARTQVEKR (68 aa)) are cytoplasmic. Residue threonine 25 is modified to Phosphothreonine. Residues 69–89 (LVVLVVLLAAGLVACLAALGI) form a helical; Signal-anchor for type II membrane protein membrane-spanning segment. At 90–770 (QYQTRSPSVC…MNPPHKCEVW (681 aa)) the chain is on the extracellular side. The region spanning 98-770 (VCLSEACVSV…MNPPHKCEVW (673 aa)) is the Peptidase M13 domain. 5 disulfide bridges follow: cysteine 99–cysteine 104, cysteine 122–cysteine 755, cysteine 130–cysteine 715, cysteine 185–cysteine 435, and cysteine 644–cysteine 767. N-linked (GlcNAc...) asparagine glycosylation is found at asparagine 166, asparagine 187, asparagine 210, asparagine 270, asparagine 316, asparagine 362, asparagine 383, and asparagine 539. Histidine 607 serves as a coordination point for Zn(2+). Glutamate 608 is an active-site residue. Histidine 611 contacts Zn(2+). N-linked (GlcNAc...) asparagine glycosylation is found at asparagine 632 and asparagine 651. Glutamate 667 provides a ligand contact to Zn(2+). Catalysis depends on aspartate 671, which acts as the Proton donor.

This sequence belongs to the peptidase M13 family. In terms of assembly, homodimer; disulfide-linked. Interacts with PPP1R16B. Interacts with TSPAN8; this interaction recruits the endothelin converting enzyme ECE1 to tetraspanin-enriched microdomains and positively modulates its enzymatic activity. It depends on Zn(2+) as a cofactor. In terms of tissue distribution, all isoforms are expressed in umbilical vein endothelial cells, polynuclear neutrophils, fibroblasts, atrium cardiomyocytes and ventricles. Isoforms A, B and C are also expressed in placenta, lung, heart, adrenal gland and phaeochromocytoma; isoforms A and C in liver, testis and small intestine; isoform B, C and D in endothelial cells and umbilical vein smooth muscle cells; isoforms C and D in saphenous vein cells, and isoform C in kidney.

Its subcellular location is the cell membrane. It carries out the reaction Hydrolysis of the 21-Trp-|-Val-22 bond in big endothelin to form endothelin 1.. Inhibited by phosphoramidon. Activated by K49-P1-20, a twenty-residue synthetic peptide shortened from the snake B.asper myotoxin II. Functionally, converts big endothelin-1 to endothelin-1. In Homo sapiens (Human), this protein is Endothelin-converting enzyme 1 (ECE1).